The primary structure comprises 301 residues: Phosphoglycolate phosphatase 2 (301 aa).

Aspartate 19 acts as the Nucleophile in catalysis.

The protein belongs to the HAD-like hydrolase superfamily. CbbY/CbbZ/Gph/YieH family.

The catalysed reaction is 2-phosphoglycolate + H2O = glycolate + phosphate. Its function is as follows. Dephosphorylates 2-phosphoglycolate, but does not contribute to photorespiratory metabolism. This is Phosphoglycolate phosphatase 2 (PGLP2) from Arabidopsis thaliana (Mouse-ear cress).